The following is an 83-amino-acid chain: Large ribosomal subunit protein bL31 (83 aa).

It belongs to the bacterial ribosomal protein bL31 family. Type A subfamily. In terms of assembly, part of the 50S ribosomal subunit.

Binds the 23S rRNA. The protein is Large ribosomal subunit protein bL31 of Synechococcus sp. (strain CC9605).